Here is a 207-residue protein sequence, read N- to C-terminus: Octanoyltransferase (207 aa).

Residues 29-204 (DDTADELWLV…ELMVQLGDEE (176 aa)) form the BPL/LPL catalytic domain. Residues 68–75 (RGGQVTYH), 135–137 (SLG), and 148–150 (GVA) each bind substrate. The active-site Acyl-thioester intermediate is the C166.

The protein belongs to the LipB family.

It localises to the cytoplasm. The catalysed reaction is octanoyl-[ACP] + L-lysyl-[protein] = N(6)-octanoyl-L-lysyl-[protein] + holo-[ACP] + H(+). The protein operates within protein modification; protein lipoylation via endogenous pathway; protein N(6)-(lipoyl)lysine from octanoyl-[acyl-carrier-protein]: step 1/2. In terms of biological role, catalyzes the transfer of endogenously produced octanoic acid from octanoyl-acyl-carrier-protein onto the lipoyl domains of lipoate-dependent enzymes. Lipoyl-ACP can also act as a substrate although octanoyl-ACP is likely to be the physiological substrate. In Methylococcus capsulatus (strain ATCC 33009 / NCIMB 11132 / Bath), this protein is Octanoyltransferase.